The sequence spans 257 residues: Type III pantothenate kinase (257 aa).

An ATP-binding site is contributed by 7-14 (DIGNSHTV). Substrate is bound at residue 106 to 109 (GTDR). The active-site Proton acceptor is Asp-108. Asp-128 is a K(+) binding site. Thr-132 is an ATP binding site. Thr-184 is a binding site for substrate.

Belongs to the type III pantothenate kinase family. Homodimer. NH4(+) is required as a cofactor. K(+) serves as cofactor.

It is found in the cytoplasm. The enzyme catalyses (R)-pantothenate + ATP = (R)-4'-phosphopantothenate + ADP + H(+). Its pathway is cofactor biosynthesis; coenzyme A biosynthesis; CoA from (R)-pantothenate: step 1/5. Catalyzes the phosphorylation of pantothenate (Pan), the first step in CoA biosynthesis. The chain is Type III pantothenate kinase from Nocardioides sp. (strain ATCC BAA-499 / JS614).